We begin with the raw amino-acid sequence, 475 residues long: GTPase Der (475 aa).

EngA-type G domains are found at residues 3–167 (LTIA…GGER) and 205–380 (LRIA…RVWN). GTP contacts are provided by residues 9–16 (GRPNVGKS), 56–60 (DTAGL), 119–122 (NKSE), 211–218 (GRPNTGKS), 258–262 (DTAGL), and 323–326 (NKWD). The region spanning 381-465 (RRISTGKLNR…PIRISLRASD (85 aa)) is the KH-like domain.

This sequence belongs to the TRAFAC class TrmE-Era-EngA-EngB-Septin-like GTPase superfamily. EngA (Der) GTPase family. As to quaternary structure, associates with the 50S ribosomal subunit.

Its function is as follows. GTPase that plays an essential role in the late steps of ribosome biogenesis. In Bartonella henselae (strain ATCC 49882 / DSM 28221 / CCUG 30454 / Houston 1) (Rochalimaea henselae), this protein is GTPase Der.